The chain runs to 314 residues: MVADTHQRGTAKTARNPIKIDLEQSGQLLRKPSWIRVRSPNSQRYQEVKRLLRENKLHTVCEEASCPNIGECFGRGTATFMILGDLCTRRCPFCDVAHGRPHAPDPDEPMHLAKSIAVLKLNYVVITSVDRDDLRDGGAQHFADCIRAIRAQSPQTRIEILVPDFRGRLEIALEKLSACPPDVMNHNLETVPRLYKQCRPGADYVHSLQLLKDFKAASPHIPTKSGLMLGLGETDEEIIGVMQDLRAHQVNMLTIGQYLQPSIGHHPVMRYVSPEDFKTFERIATNLGFSHAACGPMVRSSYHADQQAHEAGIE.

[4Fe-4S] cluster is bound by residues cysteine 61, cysteine 66, cysteine 72, cysteine 87, cysteine 91, cysteine 94, and serine 301. One can recognise a Radical SAM core domain in the interval 73–290 (FGRGTATFMI…ERIATNLGFS (218 aa)).

It belongs to the radical SAM superfamily. Lipoyl synthase family. [4Fe-4S] cluster serves as cofactor.

The protein resides in the cytoplasm. It catalyses the reaction [[Fe-S] cluster scaffold protein carrying a second [4Fe-4S](2+) cluster] + N(6)-octanoyl-L-lysyl-[protein] + 2 oxidized [2Fe-2S]-[ferredoxin] + 2 S-adenosyl-L-methionine + 4 H(+) = [[Fe-S] cluster scaffold protein] + N(6)-[(R)-dihydrolipoyl]-L-lysyl-[protein] + 4 Fe(3+) + 2 hydrogen sulfide + 2 5'-deoxyadenosine + 2 L-methionine + 2 reduced [2Fe-2S]-[ferredoxin]. It functions in the pathway protein modification; protein lipoylation via endogenous pathway; protein N(6)-(lipoyl)lysine from octanoyl-[acyl-carrier-protein]: step 2/2. In terms of biological role, catalyzes the radical-mediated insertion of two sulfur atoms into the C-6 and C-8 positions of the octanoyl moiety bound to the lipoyl domains of lipoate-dependent enzymes, thereby converting the octanoylated domains into lipoylated derivatives. The protein is Lipoyl synthase of Nitrosomonas eutropha (strain DSM 101675 / C91 / Nm57).